A 529-amino-acid polypeptide reads, in one-letter code: Tyrosinase (529 aa).

An N-terminal signal peptide occupies residues 1–18 (MFLFAMGLLLVILQPSTG). Over 19–476 (QFPRVCANTQ…YLKQAHQIWP (458 aa)) the chain is Lumenal, melanosome. 3 N-linked (GlcNAc...) asparagine glycosylation sites follow: N86, N111, and N161. H180, H202, and H211 together coordinate Cu cation. Residues N230 and N290 are each glycosylated (N-linked (GlcNAc...) asparagine). The tract at residues 293-313 (SEGPILRNPGNNDKSRTPRLP) is disordered. Residues N337 and N356 are each glycosylated (N-linked (GlcNAc...) asparagine). Cu cation is bound by residues H363 and H367. N371 carries N-linked (GlcNAc...) asparagine glycosylation. H390 is a binding site for Cu cation. A helical membrane pass occupies residues 477–497 (WLVGAAVIGGIITAVLSGLIL). The Cytoplasmic segment spans residues 498-529 (ACRKKRKGTSPEIQPLLTESEDYNNVSYQSHF).

The protein belongs to the tyrosinase family. The cofactor is Cu(2+).

The protein resides in the melanosome membrane. The protein localises to the melanosome. The catalysed reaction is 2 L-dopa + O2 = 2 L-dopaquinone + 2 H2O. It carries out the reaction L-tyrosine + O2 = L-dopaquinone + H2O. This is a copper-containing oxidase that functions in the formation of pigments such as melanins and other polyphenolic compounds. Catalyzes the initial and rate limiting step in the cascade of reactions leading to melanin production from tyrosine. In addition to hydroxylating tyrosine to DOPA (3,4-dihydroxyphenylalanine), also catalyzes the oxidation of DOPA to DOPA-quinone, and possibly the oxidation of DHI (5,6-dihydroxyindole) to indole-5,6 quinone. The protein is Tyrosinase (TYR) of Gallus gallus (Chicken).